The primary structure comprises 533 residues: Probable nucleolar protein 5-2 (533 aa).

A Nop domain is found at 281–399 (IAPNLTALVG…LEARLRNLEG (119 aa)). 2 disordered regions span residues 401–433 (DLGR…ITPA) and 445–533 (GETS…KSKD). The span at 413-424 (PKIEVYNKDKKM) shows a compositional bias: basic and acidic residues. A compositionally biased stretch (basic residues) spans 521–533 (KKDKKEKKKKSKD).

This sequence belongs to the NOP5/NOP56 family.

It localises to the nucleus. Its subcellular location is the nucleolus. Required for 60S ribosomal subunit biogenesis. The polypeptide is Probable nucleolar protein 5-2 (NOP5-2) (Arabidopsis thaliana (Mouse-ear cress)).